A 121-amino-acid chain; its full sequence is Holo-[acyl-carrier-protein] synthase (121 aa).

Positions 8 and 55 each coordinate Mg(2+).

It belongs to the P-Pant transferase superfamily. AcpS family. Mg(2+) serves as cofactor.

Its subcellular location is the cytoplasm. The catalysed reaction is apo-[ACP] + CoA = holo-[ACP] + adenosine 3',5'-bisphosphate + H(+). Functionally, transfers the 4'-phosphopantetheine moiety from coenzyme A to a Ser of acyl-carrier-protein. The protein is Holo-[acyl-carrier-protein] synthase of Caldicellulosiruptor bescii (strain ATCC BAA-1888 / DSM 6725 / KCTC 15123 / Z-1320) (Anaerocellum thermophilum).